Reading from the N-terminus, the 514-residue chain is Bifunctional lysine-specific demethylase and histidyl-hydroxylase NO66 (514 aa).

Residues 1-53 (MKRGLEEEIEEMSEEEVGVNNNNNGKKKKKKVVKKSKPVPLTKSVPQVSSQPL) form a disordered region. Residues 7–17 (EEIEEMSEEEV) are compositionally biased toward acidic residues. Basic residues predominate over residues 25-37 (GKKKKKKVVKKSK). Positions 44 to 53 (SVPQVSSQPL) are enriched in polar residues. The 148-residue stretch at 180–327 (CSVRLLNPQT…IGKVLNRALE (148 aa)) folds into the JmjC domain. Fe cation is bound by residues histidine 226, aspartate 228, and histidine 291.

Belongs to the ROX family. NO66 subfamily. Requires Fe(2+) as cofactor.

The protein localises to the nucleus. It catalyses the reaction N(6),N(6)-dimethyl-L-lysyl(36)-[histone H3] + 2 2-oxoglutarate + 2 O2 = L-lysyl(36)-[histone H3] + 2 formaldehyde + 2 succinate + 2 CO2. In terms of biological role, oxygenase that can act as both a histone lysine demethylase and a ribosomal histidine hydroxylase. Specifically demethylates 'Lys-4' (H3K4me) and 'Lys-36' (H3K36me) of histone H3, thereby playing a central role in histone code. This is Bifunctional lysine-specific demethylase and histidyl-hydroxylase NO66 (jcdg) from Dictyostelium discoideum (Social amoeba).